The sequence spans 243 residues: uncharacterized protein (243 aa).

The first 16 residues, 1–16 (MKLLALVALCAVGVAS), serve as a signal peptide directing secretion. Asn55 carries N-linked (GlcNAc...) asparagine glycosylation. 2 disordered regions span residues 95 to 126 (SQGR…EKPS) and 208 to 235 (NQQQ…KPTV). Low complexity-rich tracts occupy residues 99 to 112 (NQQQ…SQGG) and 209 to 229 (QQQQ…STTL). Cys141 and Cys239 are joined by a disulfide.

It belongs to the protease inhibitor I33 family.

The protein localises to the secreted. This is an uncharacterized protein from Caenorhabditis elegans.